Reading from the N-terminus, the 310-residue chain is MESGNSTRRIPSFFLLGFSENPHLQFLIFVLFLSMYLVTVLGNLLIIMVIITQSPLHTPMYFFLANLSFVDICFTSTTVPKMLVNIQTQSKAITYADCISQMSVFLVFAELDNFLLAVMAYDRYVAICHPLYYTFIVNQHLCILMVLLSWVVSILHAFLQSSIVLQLTFCGDVKIPHFFCELNQLSQLTCLDSLSSHLIMNLVPVLLAVISFSSILYSYFKIVSSICSISSVQGKYTAFSTCVSHLSIVFLFYSTGLGVYVSSAVVQSSHSAARASVMYTVVTPMLNPFIYSLRNKDVKKALERLLEGKL.

Topologically, residues 1–25 (MESGNSTRRIPSFFLLGFSENPHLQ) are extracellular. Asn-5 carries N-linked (GlcNAc...) asparagine glycosylation. Residues 26–46 (FLIFVLFLSMYLVTVLGNLLI) form a helical membrane-spanning segment. At 47–67 (IMVIITQSPLHTPMYFFLANL) the chain is on the cytoplasmic side. Residues 68 to 88 (SFVDICFTSTTVPKMLVNIQT) form a helical membrane-spanning segment. Topologically, residues 89–100 (QSKAITYADCIS) are extracellular. Cys-98 and Cys-190 are oxidised to a cystine. Residues 101–121 (QMSVFLVFAELDNFLLAVMAY) traverse the membrane as a helical segment. Over 122–135 (DRYVAICHPLYYTF) the chain is Cytoplasmic. The helical transmembrane segment at 136 to 156 (IVNQHLCILMVLLSWVVSILH) threads the bilayer. The Extracellular segment spans residues 157 to 202 (AFLQSSIVLQLTFCGDVKIPHFFCELNQLSQLTCLDSLSSHLIMNL). The helical transmembrane segment at 203–223 (VPVLLAVISFSSILYSYFKIV) threads the bilayer. At 224–240 (SSICSISSVQGKYTAFS) the chain is on the cytoplasmic side. The helical transmembrane segment at 241-261 (TCVSHLSIVFLFYSTGLGVYV) threads the bilayer. Topologically, residues 262–272 (SSAVVQSSHSA) are extracellular. A helical transmembrane segment spans residues 273–293 (ARASVMYTVVTPMLNPFIYSL). The Cytoplasmic segment spans residues 294 to 310 (RNKDVKKALERLLEGKL).

The protein belongs to the G-protein coupled receptor 1 family.

It is found in the cell membrane. Functionally, odorant receptor. This chain is Olfactory receptor 7A42, found in Mus musculus (Mouse).